A 598-amino-acid polypeptide reads, in one-letter code: Eukaryotic translation initiation factor 3 subunit D (598 aa).

Residues 104–178 (VKTRGFGRGG…YDKPQRNRDS (75 aa)) are disordered. Residues 109 to 132 (FGRGGGTIFRGRGQRGGAQRGRGG) show a composition bias toward gly residues. The segment covering 165-177 (GWKDYDKPQRNRD) has biased composition (basic and acidic residues). Residues 304–318 (SIDLVTVNENAADAP) are RNA gate. A disordered region spans residues 574–598 (NTFEEEDDTGAKAEKDEESEEKDEE). Acidic residues predominate over residues 589–598 (DEESEEKDEE).

This sequence belongs to the eIF-3 subunit D family. In terms of assembly, component of the eukaryotic translation initiation factor 3 (eIF-3) complex.

The protein resides in the cytoplasm. MRNA cap-binding component of the eukaryotic translation initiation factor 3 (eIF-3) complex, which is involved in protein synthesis of a specialized repertoire of mRNAs and, together with other initiation factors, stimulates binding of mRNA and methionyl-tRNAi to the 40S ribosome. The eIF-3 complex specifically targets and initiates translation of a subset of mRNAs involved in cell proliferation. In the eIF-3 complex, eif3d specifically recognizes and binds the 7-methylguanosine cap of a subset of mRNAs. The sequence is that of Eukaryotic translation initiation factor 3 subunit D from Coccidioides immitis (strain RS) (Valley fever fungus).